Here is a 323-residue protein sequence, read N- to C-terminus: Phosphomevalonate kinase (323 aa).

Belongs to the GHMP kinase family. As to quaternary structure, homodimer. Requires Mg(2+) as cofactor.

The enzyme catalyses (R)-5-phosphomevalonate + ATP = (R)-5-diphosphomevalonate + ADP. It participates in isoprenoid biosynthesis; isopentenyl diphosphate biosynthesis via mevalonate pathway; isopentenyl diphosphate from (R)-mevalonate: step 2/3. Its function is as follows. Catalyzes the phosphorylation of (R)-mevalonate 5-phosphate (MVAP) to (R)-mevalonate 5-diphosphate (MVAPP). Functions in the mevalonate (MVA) pathway leading to isopentenyl diphosphate (IPP), a key precursor for the biosynthesis of isoprenoid compounds such as archaeal membrane lipids. The protein is Phosphomevalonate kinase of Saccharolobus solfataricus (strain ATCC 35092 / DSM 1617 / JCM 11322 / P2) (Sulfolobus solfataricus).